The chain runs to 386 residues: Bifunctional enzyme IspD/IspF (386 aa).

Residues 1–225 (MYNFVTLSIL…SCLSAPSSDT (225 aa)) form a 2-C-methyl-D-erythritol 4-phosphate cytidylyltransferase region. Residues 226 to 386 (LSGVGFDVHA…NLKYFDWTKI (161 aa)) form a 2-C-methyl-D-erythritol 2,4-cyclodiphosphate synthase region. The a divalent metal cation site is built by Asp-232 and His-234. Residues 232-234 (DVH) and 258-259 (HS) each bind 4-CDP-2-C-methyl-D-erythritol 2-phosphate. A divalent metal cation is bound at residue His-266. Residues 280–282 (DIG), 285–289 (FPDND), 356–359 (TTTE), Phe-363, and Arg-366 contribute to the 4-CDP-2-C-methyl-D-erythritol 2-phosphate site.

In the N-terminal section; belongs to the IspD/TarI cytidylyltransferase family. IspD subfamily. The protein in the C-terminal section; belongs to the IspF family. A divalent metal cation is required as a cofactor.

The enzyme catalyses 2-C-methyl-D-erythritol 4-phosphate + CTP + H(+) = 4-CDP-2-C-methyl-D-erythritol + diphosphate. It catalyses the reaction 4-CDP-2-C-methyl-D-erythritol 2-phosphate = 2-C-methyl-D-erythritol 2,4-cyclic diphosphate + CMP. It participates in isoprenoid biosynthesis; isopentenyl diphosphate biosynthesis via DXP pathway; isopentenyl diphosphate from 1-deoxy-D-xylulose 5-phosphate: step 2/6. The protein operates within isoprenoid biosynthesis; isopentenyl diphosphate biosynthesis via DXP pathway; isopentenyl diphosphate from 1-deoxy-D-xylulose 5-phosphate: step 4/6. In terms of biological role, bifunctional enzyme that catalyzes the formation of 4-diphosphocytidyl-2-C-methyl-D-erythritol from CTP and 2-C-methyl-D-erythritol 4-phosphate (MEP) (IspD), and catalyzes the conversion of 4-diphosphocytidyl-2-C-methyl-D-erythritol 2-phosphate (CDP-ME2P) to 2-C-methyl-D-erythritol 2,4-cyclodiphosphate (ME-CPP) with a corresponding release of cytidine 5-monophosphate (CMP) (IspF). The protein is Bifunctional enzyme IspD/IspF of Sulfurimonas denitrificans (strain ATCC 33889 / DSM 1251) (Thiomicrospira denitrificans (strain ATCC 33889 / DSM 1251)).